The following is a 258-amino-acid chain: Thrombin-like enzyme CPI-enzyme 2 (258 aa).

Residues Met1–Ala18 form the signal peptide. Positions Gln19 to Leu24 are excised as a propeptide. The region spanning Val25 to Ala249 is the Peptidase S1 domain. Disulfide bonds link Cys31–Cys163, Cys50–Cys66, Cys98–Cys256, Cys142–Cys210, Cys174–Cys189, and Cys200–Cys225. Asn44 carries N-linked (GlcNAc...) asparagine glycosylation. His65 functions as the Charge relay system in the catalytic mechanism. 2 N-linked (GlcNAc...) asparagine glycosylation sites follow: Asn79 and Asn103. Asp110 acts as the Charge relay system in catalysis. An N-linked (GlcNAc...) asparagine glycan is attached at Asn121. Ser204 serves as the catalytic Charge relay system.

It belongs to the peptidase S1 family. Snake venom subfamily. In terms of assembly, monomer. Post-translationally, N-glycosylated. In terms of tissue distribution, expressed by the venom gland.

The protein resides in the secreted. In terms of biological role, thrombin-like snake venom serine protease that cleaves fibrinogen beta (FGB) releasing fibrinopeptide B. Promotes capillary permeability-increasing activity through the release of peptides from the beta-chain of fibrinogen. In Gloydius ussuriensis (Ussuri mamushi), this protein is Thrombin-like enzyme CPI-enzyme 2.